Reading from the N-terminus, the 353-residue chain is Protein pelota homolog (353 aa).

The protein belongs to the eukaryotic release factor 1 family. Pelota subfamily. In terms of assembly, monomer. Requires a divalent metal cation as cofactor.

It localises to the cytoplasm. Functionally, may function in recognizing stalled ribosomes, interact with stem-loop structures in stalled mRNA molecules, and effect endonucleolytic cleavage of the mRNA. May play a role in the release non-functional ribosomes and degradation of damaged mRNAs. Has endoribonuclease activity. This is Protein pelota homolog from Methanobrevibacter smithii (strain ATCC 35061 / DSM 861 / OCM 144 / PS).